We begin with the raw amino-acid sequence, 349 residues long: MGKGGSLSEGVIKNIIISYTYVAIWIFLSFTVIVYNKYILDKKMYDWPFPISLTMIHMSFCSTLAFLLIKVFKFVEPVSMSRDTYLRSVVPIGALYSLSLWLSNSAYIYLSVSFIQMLKALMPVAVYSIGVLFKKEGFKSETMMNMLSISFGVAIAAYGEARFDVWGVILQLGAVAFEATRLVMIQILLTSKGITLNPITSLYYVAPCCLAFLFIPWIVVEFPILRDTSSFHFDYLIFGTNSFCAFALNLAVFLLVGKTSALTMNVAGVVKDWLLIAFSWSVIKDTVTPINLFGYGIAFLGVAYYNHAKLQALKAKEAQKTAQQVDEETGRLLEEREGNEGGRKNEPED.

Helical transmembrane passes span 15 to 35, 49 to 69, 89 to 109, 113 to 133, 141 to 161, 165 to 185, 205 to 225, 236 to 256, 263 to 283, and 286 to 306; these read IIIS…VIVY, FPIS…FLLI, VVPI…AYIY, SFIQ…GVLF, ETMM…YGEA, VWGV…LVMI, VAPC…FPIL, LIFG…FLLV, TMNV…WSVI, and TVTP…AYYN. The 119-residue stretch at 38-156 folds into the EamA domain; the sequence is YILDKKMYDW…LSISFGVAIA (119 aa). The tract at residues 321 to 349 is disordered; sequence TAQQVDEETGRLLEEREGNEGGRKNEPED. A compositionally biased stretch (basic and acidic residues) spans 328-349; it reads ETGRLLEEREGNEGGRKNEPED.

It belongs to the TPT transporter family. TPT (TC 2.A.7.9) subfamily.

Its subcellular location is the membrane. The protein is Probable sugar phosphate/phosphate translocator At5g25400 of Arabidopsis thaliana (Mouse-ear cress).